The chain runs to 282 residues: MGISSILLSALIAGGALALPAAEPVSFDIRDENITLARRAEAINYNQDYIASGANVQYSPNMAAGSFSINYNTQGDFVVGLGWQPGDANPITYSGSFSASGVGILAVYGWSTNPLVEYYVMEVHDGYQTAGTHKGTVTTDGGTYDIWEHQQVNQPSILGTSTFNQYISIRQSPRTSGTVTVQNHFNAWAQAGMNLGTLNYQVMAVESWSGSGSGQISLSKGTGGGSTTTTPTGPTSTSTAPSSGGTGAAQWGQCGGIGWTGPTTCVAPYTCKYENAYYSQCQ.

A signal peptide spans 1–39 (MGISSILLSALIAGGALALPAAEPVSFDIRDENITLARR). N-linked (GlcNAc...) asparagine glycosylation is present at Asn33. Positions 40-219 (AEAINYNQDY…GSGSGQISLS (180 aa)) constitute a GH11 domain. Catalysis depends on Glu117, which acts as the Nucleophile. Glu206 (proton donor) is an active-site residue. The tract at residues 214-245 (GQISLSKGTGGGSTTTTPTGPTSTSTAPSSGG) is disordered. Low complexity predominate over residues 227 to 243 (TTTTPTGPTSTSTAPSS). The CBM1 domain maps to 246 to 282 (TGAAQWGQCGGIGWTGPTTCVAPYTCKYENAYYSQCQ).

The protein belongs to the glycosyl hydrolase 11 (cellulase G) family.

It localises to the secreted. The catalysed reaction is Endohydrolysis of (1-&gt;4)-beta-D-xylosidic linkages in xylans.. It participates in glycan degradation; xylan degradation. Its activity is regulated as follows. Significantly inhibited by the wheat xylanase inhibiting protein I (XIP-I) and the proteinaceous endoxylanase Triticum aestivum xylanase inhibitors I (TAXI-I), but not TAXI-II. Endo-1,4-beta-xylanase involved in the hydrolysis of xylan, a major structural heterogeneous polysaccharide found in plant biomass representing the second most abundant polysaccharide in the biosphere, after cellulose. The protein is Endo-1,4-beta-xylanase B (xynB) of Talaromyces funiculosus (Fruitlet core rot fungus).